Here is a 35-residue protein sequence, read N- to C-terminus: ANKRPIWIMGHMVNAIYQIDEFVNLGANSIETDVS.

Residue His-11 is part of the active site. The Mg(2+) site is built by Glu-31 and Asp-33.

This sequence belongs to the arthropod phospholipase D family. Class I subfamily. Requires Mg(2+) as cofactor. Contains 1 disulfide bond. As to expression, expressed by the venom gland.

Its subcellular location is the secreted. The catalysed reaction is an N-(acyl)-sphingosylphosphocholine = an N-(acyl)-sphingosyl-1,3-cyclic phosphate + choline. The enzyme catalyses an N-(acyl)-sphingosylphosphoethanolamine = an N-(acyl)-sphingosyl-1,3-cyclic phosphate + ethanolamine. It catalyses the reaction a 1-acyl-sn-glycero-3-phosphocholine = a 1-acyl-sn-glycero-2,3-cyclic phosphate + choline. It carries out the reaction a 1-acyl-sn-glycero-3-phosphoethanolamine = a 1-acyl-sn-glycero-2,3-cyclic phosphate + ethanolamine. In terms of biological role, dermonecrotic toxins cleave the phosphodiester linkage between the phosphate and headgroup of certain phospholipids (sphingolipid and lysolipid substrates), forming an alcohol (often choline) and a cyclic phosphate. This toxin acts on sphingomyelin (SM). It may also act on ceramide phosphoethanolamine (CPE), lysophosphatidylcholine (LPC) and lysophosphatidylethanolamine (LPE), but not on lysophosphatidylserine (LPS), and lysophosphatidylglycerol (LPG). It acts by transphosphatidylation, releasing exclusively cyclic phosphate products as second products. Induces dermonecrosis, hemolysis, increased vascular permeability, edema, inflammatory response, and platelet aggregation. This chain is Dermonecrotic toxin LdSicTox-alpha-1, found in Loxosceles deserta (Desert recluse spider).